The sequence spans 440 residues: Ferredoxin--NADP reductase (440 aa).

The CpcD-like domain maps to 17–75 (SRVFVYEVVGMRQNEETDQTNYPIRKSGSVFIRVPYNRMNQEMQRITRLGGKIVSIQTV). Residues 98–142 (AKSEGNGKATPVKTDSGAKGFAKPPAEEQLKKKDNKGNTMTQAKA) are disordered. A compositionally biased stretch (basic and acidic residues) spans 122–133 (PAEEQLKKKDNK). An FAD-binding FR-type domain is found at 155–279 (NAPFIGKVIS…TGPVGKEMLL (125 aa)). FAD is bound by residues 214–217 (RLYS), 235–237 (CVR), Tyr-241, 253–255 (VCS), and Thr-294. Residues Ser-217 and Arg-237 each contribute to the NADP(+) site. Residues Thr-294, 330–331 (VP), 360–361 (SR), 370–374 (RMYIQ), 399–400 (GL), and Glu-438 each bind NADP(+).

This sequence belongs to the ferredoxin--NADP reductase type 1 family. It depends on FAD as a cofactor.

Its subcellular location is the cellular thylakoid membrane. The enzyme catalyses 2 reduced [2Fe-2S]-[ferredoxin] + NADP(+) + H(+) = 2 oxidized [2Fe-2S]-[ferredoxin] + NADPH. The sequence is that of Ferredoxin--NADP reductase (petH) from Nostoc sp. (strain PCC 7120 / SAG 25.82 / UTEX 2576).